The chain runs to 561 residues: Proline--tRNA ligase (561 aa).

It belongs to the class-II aminoacyl-tRNA synthetase family. ProS type 1 subfamily. As to quaternary structure, homodimer.

Its subcellular location is the cytoplasm. The catalysed reaction is tRNA(Pro) + L-proline + ATP = L-prolyl-tRNA(Pro) + AMP + diphosphate. In terms of biological role, catalyzes the attachment of proline to tRNA(Pro) in a two-step reaction: proline is first activated by ATP to form Pro-AMP and then transferred to the acceptor end of tRNA(Pro). As ProRS can inadvertently accommodate and process non-cognate amino acids such as alanine and cysteine, to avoid such errors it has two additional distinct editing activities against alanine. One activity is designated as 'pretransfer' editing and involves the tRNA(Pro)-independent hydrolysis of activated Ala-AMP. The other activity is designated 'posttransfer' editing and involves deacylation of mischarged Ala-tRNA(Pro). The misacylated Cys-tRNA(Pro) is not edited by ProRS. In Wigglesworthia glossinidia brevipalpis, this protein is Proline--tRNA ligase.